The sequence spans 101 residues: MILEHVLVLSAYLFFIGLYGLITSRNMVRALMCLELILNAVNMNFVTFSDFFDNSQLKGDIFCIFVIAIAAAEAAIGLAIVSSIYRNRKSTRINQSTLLNK.

Helical transmembrane passes span 2-22 (ILEH…YGLI), 32-52 (MCLE…SDFF), and 61-81 (IFCI…LAIV).

This sequence belongs to the complex I subunit 4L family. In terms of assembly, NDH is composed of at least 16 different subunits, 5 of which are encoded in the nucleus.

Its subcellular location is the plastid. The protein resides in the chloroplast thylakoid membrane. The catalysed reaction is a plastoquinone + NADH + (n+1) H(+)(in) = a plastoquinol + NAD(+) + n H(+)(out). It catalyses the reaction a plastoquinone + NADPH + (n+1) H(+)(in) = a plastoquinol + NADP(+) + n H(+)(out). Its function is as follows. NDH shuttles electrons from NAD(P)H:plastoquinone, via FMN and iron-sulfur (Fe-S) centers, to quinones in the photosynthetic chain and possibly in a chloroplast respiratory chain. The immediate electron acceptor for the enzyme in this species is believed to be plastoquinone. Couples the redox reaction to proton translocation, and thus conserves the redox energy in a proton gradient. The protein is NAD(P)H-quinone oxidoreductase subunit 4L, chloroplastic of Aethionema cordifolium (Lebanon stonecress).